A 1567-amino-acid chain; its full sequence is Myosin-2A (1567 aa).

One can recognise a Myosin N-terminal SH3-like domain in the interval 4–57 (EVGTRCWYPSKEQGWIGAEVTKNDLKDGTYFMELTLEDNEVVNVETKDLTNEKD). Residues 70-786 (ESTEDLTTLS…MLAYFEKLRS (717 aa)) form the Myosin motor domain. 164–171 (GESGAGKT) is a binding site for ATP. The segment at 446-526 (FIGVLDIYGF…LGILSLLDEE (81 aa)) is actin-binding. Residues 619–640 (EEAKKNAASQDQKQLKKPTPIR) form a disordered region. IQ domains lie at 789–818 (MNSA…SLSL), 812–836 (MKAS…EYEL), 837–859 (EQHA…YISG), 860–884 (VISS…QSKY), 885–907 (ESNA…AYES), and 908–937 (KRRD…DAKS). A coiled-coil region spans residues 947 to 1091 (KLENKVIQLT…LAHLQTSIAL (145 aa)). A non alpha-helical, tail domain region spans residues 1092-1567 (GTVTTNTNIV…VAQQVTVPDA (476 aa)). The region spanning 1230 to 1505 (AQVLTTIQKV…LKYVADIVKK (276 aa)) is the Dilute domain.

It belongs to the TRAFAC class myosin-kinesin ATPase superfamily. Myosin family. Homodimer. Interacts with calmodulin (CMD1) and the myosin light chain MLC1 through its IQ repeats.

Myosin heavy chain that is required for the cell cycle-regulated transport of various organelles and proteins for their segregation. Functions by binding with its tail domain to receptor proteins on organelles and exerting force with its N-terminal motor domain against actin filaments, thereby transporting its cargo along polarized actin cables. The chain is Myosin-2A (MYO2A) from Naumovozyma castellii (Yeast).